A 388-amino-acid polypeptide reads, in one-letter code: GTPase Obg (388 aa).

Residues 4-162 enclose the Obg domain; it reads SNFVDYVKIY…MTVILELKLL (159 aa). The disordered stretch occupies residues 18–45; that stretch reads KGGRGSTHMRREKYTPNGGPDGGDGGRG. Residues 36-45 are compositionally biased toward gly residues; that stretch reads GPDGGDGGRG. Residues 163 to 329 enclose the OBG-type G domain; it reads ADVGLVGFPN…LKDILWTELN (167 aa). Residues 169–176, 194–198, 216–219, 283–286, and 310–312 contribute to the GTP site; these read GFPNAGKS, FTTLE, DIPG, TKSD, and SSV. Mg(2+) contacts are provided by serine 176 and threonine 196. Positions 352–388 are disordered; sequence LKDMGEDEELDYEYEDDGDGDEDDLDYEYEEEDWEDK. Positions 356–388 are enriched in acidic residues; sequence GEDEELDYEYEDDGDGDEDDLDYEYEEEDWEDK.

Belongs to the TRAFAC class OBG-HflX-like GTPase superfamily. OBG GTPase family. As to quaternary structure, monomer. Mg(2+) is required as a cofactor.

It is found in the cytoplasm. An essential GTPase which binds GTP, GDP and possibly (p)ppGpp with moderate affinity, with high nucleotide exchange rates and a fairly low GTP hydrolysis rate. Plays a role in control of the cell cycle, stress response, ribosome biogenesis and in those bacteria that undergo differentiation, in morphogenesis control. The sequence is that of GTPase Obg from Bacteroides fragilis (strain ATCC 25285 / DSM 2151 / CCUG 4856 / JCM 11019 / LMG 10263 / NCTC 9343 / Onslow / VPI 2553 / EN-2).